We begin with the raw amino-acid sequence, 53 residues long: UPF0181 protein VC_A0569 (53 aa).

Belongs to the UPF0181 family.

The sequence is that of UPF0181 protein VC_A0569 from Vibrio cholerae serotype O1 (strain ATCC 39315 / El Tor Inaba N16961).